Here is an 878-residue protein sequence, read N- to C-terminus: Alanine--tRNA ligase (878 aa).

Zn(2+) is bound by residues His562, His566, Cys670, and His674.

The protein belongs to the class-II aminoacyl-tRNA synthetase family. Requires Zn(2+) as cofactor.

Its subcellular location is the cytoplasm. It carries out the reaction tRNA(Ala) + L-alanine + ATP = L-alanyl-tRNA(Ala) + AMP + diphosphate. Its function is as follows. Catalyzes the attachment of alanine to tRNA(Ala) in a two-step reaction: alanine is first activated by ATP to form Ala-AMP and then transferred to the acceptor end of tRNA(Ala). Also edits incorrectly charged Ser-tRNA(Ala) and Gly-tRNA(Ala) via its editing domain. The polypeptide is Alanine--tRNA ligase (Acinetobacter baylyi (strain ATCC 33305 / BD413 / ADP1)).